A 126-amino-acid chain; its full sequence is Probable V-type proton ATPase subunit G (126 aa).

It belongs to the V-ATPase G subunit family. V-ATPase is a heteromultimeric enzyme made up of two complexes: the ATP-hydrolytic V1 complex and the proton translocation V0 complex. The V1 complex consists of three catalytic AB heterodimers that form a heterohexamer, three peripheral stalks each consisting of EG heterodimers, one central rotor including subunits D and F, and the regulatory subunits C and H. The proton translocation complex V0 consists of the proton transport subunit a, a ring of proteolipid subunits c9c'', rotary subunit d, subunits e and f, and the accessory subunits vah-19/Ac45 and vah-20/PRR. Interacts with ced-1.

Functionally, subunit of the V1 complex of vacuolar(H+)-ATPase (V-ATPase), a multisubunit enzyme composed of a peripheral complex (V1) that hydrolyzes ATP and a membrane integral complex (V0) that translocates protons. V-ATPase is responsible for acidifying and maintaining the pH of intracellular compartments and in some cell types, is targeted to the plasma membrane, where it is responsible for acidifying the extracellular environment. In neurons, required for necrotic cell death by promoting intracellular acidification. The protein is Probable V-type proton ATPase subunit G of Caenorhabditis elegans.